The primary structure comprises 58 residues: Small ribosomal subunit protein bS21 (58 aa).

A disordered region spans residues 25–58 (KAGTLQEARKREHYEKPSVKRKRKSEAARKRKKI). Residues 31-42 (EARKREHYEKPS) show a composition bias toward basic and acidic residues. A compositionally biased stretch (basic residues) spans 43–58 (VKRKRKSEAARKRKKI).

The protein belongs to the bacterial ribosomal protein bS21 family.

This Streptococcus thermophilus (strain ATCC BAA-491 / LMD-9) protein is Small ribosomal subunit protein bS21.